Here is a 448-residue protein sequence, read N- to C-terminus: Nicotinate phosphoribosyltransferase pncB1 (448 aa).

The disordered stretch occupies residues 1-21 (MGPPPAARRREGEPDNQDPAG). At H212 the chain carries Phosphohistidine. A disordered region spans residues 353-372 (RSSYKESPGGRKEALRRSRA).

This sequence belongs to the NAPRTase family. Post-translationally, transiently phosphorylated on a His residue during the reaction cycle. Phosphorylation strongly increases the affinity for substrates and increases the rate of nicotinate D-ribonucleotide production. Dephosphorylation regenerates the low-affinity form of the enzyme, leading to product release.

The enzyme catalyses nicotinate + 5-phospho-alpha-D-ribose 1-diphosphate + ATP + H2O = nicotinate beta-D-ribonucleotide + ADP + phosphate + diphosphate. Its pathway is cofactor biosynthesis; NAD(+) biosynthesis; nicotinate D-ribonucleotide from nicotinate: step 1/1. Functionally, involved in the Preiss-Handler pathway, which is a recycling route that permits the salvage of free nicotinamide (NM) and nicotinic acid (Na) involved in the NAD biosynthesis. Catalyzes the synthesis of beta-nicotinate D-ribonucleotide from nicotinate and 5-phospho-D-ribose 1-phosphate at the expense of ATP. It is not able to use nicotinamide. PncB1 contributes to basal NAD level. The sequence is that of Nicotinate phosphoribosyltransferase pncB1 (pncB1) from Mycobacterium tuberculosis (strain ATCC 25618 / H37Rv).